We begin with the raw amino-acid sequence, 635 residues long: Probable monoacyl phosphatidylinositol tetramannoside-binding protein LpqW (635 aa).

The first 26 residues, 1-26 (MGVPSPVRRVCVTVGALVALACMVLA), serve as a signal peptide directing secretion. Disordered stretches follow at residues 32-52 (PPPA…PRRP), 389-412 (NTSV…GPPE), and 511-551 (NAPT…LVKA). Composition is skewed to low complexity over residues 390–411 (TSVS…TGPP) and 511–531 (NAPT…APDT).

This sequence belongs to the bacterial solute-binding protein 5 family.

The protein operates within phospholipid metabolism; phosphatidylinositol metabolism. In terms of biological role, may directly or indirectly regulate the accessibility of the key branch point intermediate, monoacyl phosphatidylinositol tetramannoside (AcPIM4), to the elongating alpha-1,6 mannosyltransferases which could regulate the lipoarabinomannans (LAMs) biosynthesis. The sequence is that of Probable monoacyl phosphatidylinositol tetramannoside-binding protein LpqW (lpqW) from Mycobacterium tuberculosis (strain CDC 1551 / Oshkosh).